The sequence spans 79 residues: Cyclin-dependent kinases regulatory subunit 2 (79 aa).

The residue at position 4 (K4) is an N6-acetyllysine.

This sequence belongs to the CKS family. Forms a homohexamer that can probably bind six kinase subunits.

In terms of biological role, binds to the catalytic subunit of the cyclin dependent kinases and is essential for their biological function. This Bos taurus (Bovine) protein is Cyclin-dependent kinases regulatory subunit 2 (CKS2).